Here is a 637-residue protein sequence, read N- to C-terminus: Chloride intracellular channel protein 6 (637 aa).

The interval 1 to 400 (MAETAEPEGG…EASEEGDPGQ (400 aa)) is disordered. Residues 35–63 (GPEASEGAAKAPSGEGAGAAAKAGATEEA) show a composition bias toward low complexity. Ser-39 carries the post-translational modification Phosphoserine. Residues 126–137 (CELRGEAAREAE) are compositionally biased toward basic and acidic residues. The span at 138–152 (GQAAAPAAPGAQEEA) shows a compositional bias: low complexity. 15 tandem repeats follow at residues 155 to 160 (GDSVDA), 161 to 166 (EGSIDA), 167 to 172 (GGSVDA), 173 to 178 (AGSVDA), 179 to 184 (GGSIDA), 185 to 190 (GGSMDA), 191 to 196 (GGSVDA), 197 to 202 (GGSIDT), 203 to 208 (GGSVDA), 209 to 214 (AGSVDA), 215 to 220 (GGSIDT), 221 to 226 (GRNVDA), 227 to 232 (GGSIDA), 233 to 238 (GGSVDA), and 239 to 244 (GGSMDA). A 15 X 6 AA tandem repeat of [GEA]-[DGR]-[SN]-[VIM]-D-[AT] region spans residues 155 to 244 (GDSVDAEGSI…SVDAGGSMDA (90 aa)). Over residues 247 to 256 (PAGGAHGAGG) the composition is skewed to gly residues. Over residues 305–314 (GSEDAAGEDG) the composition is skewed to acidic residues. The span at 315–332 (DQGRPQEETEQQAERQEP) shows a compositional bias: basic and acidic residues. Ser-348 and Ser-393 each carry phosphoserine. The G-site signature appears at 420-423 (CPFS). A helical transmembrane segment spans residues 422 to 442 (FSQRLFMILWLKGVIFNVTTV). The region spanning 466-637 (DGDVKTDVNK…AYSDVAKRMK (172 aa)) is the GST C-terminal domain.

It belongs to the chloride channel CLIC family. Monomer (soluble state). Interacts with dopamine receptors DRD2, DRD3 and DRD4. In terms of processing, phosphorylated. In terms of tissue distribution, expressed in brain, chorioretinal, lacrimal glands, submandibular glands, airway epithelium, kidney and gastric mucosa, where it is preferentially expressed in cells that secrete or transport water. In brain, it is highly expressed in choroid plexus. Not detected in pancreas, adrenal glands, heart, skeletal muscle, ileal mucosa, liver and lung.

It is found in the cytoplasm. Its subcellular location is the cell membrane. The enzyme catalyses chloride(in) = chloride(out). Channel activity is redox- and pH-regulated. Inhibited by IAA-94. In terms of biological role, in the soluble state, catalyzes glutaredoxin-like thiol disulfide exchange reactions with reduced glutathione as electron donor. Can insert into membranes and form voltage-dependent chloride-selective channels. The channel opens upon membrane depolarization at positive voltages and closes at negative membrane voltages. May play a critical role in water-secreting cells, possibly through the regulation of chloride ion transport. The chain is Chloride intracellular channel protein 6 (CLIC6) from Oryctolagus cuniculus (Rabbit).